We begin with the raw amino-acid sequence, 1523 residues long: Rho GTPase-activating protein gacHH (1523 aa).

3 Kelch repeats span residues 30–76 (DIVI…YGHS), 83–133 (KMFV…LIYD), and 135–184 (YILI…DISP). Composition is skewed to polar residues over residues 161–173 (NSWT…SSTG) and 184–194 (PRSSTTTPTHQ). Residues 161-256 (NSWTKPSSNS…GGSPMTTPPT (96 aa)) are disordered. Residues 195–211 (SVNGSNSNSSSSSRVRS) show a composition bias toward low complexity. Residues 212-221 (ATISSHNNSP) are compositionally biased toward polar residues. The span at 227–244 (NNNNNNNNNSNNSNNSNN) shows a compositional bias: low complexity. Kelch repeat units follow at residues 335-384 (KAFI…AIGS), 386-441 (LFIF…PISS), and 443-496 (ILII…PITS). 3 disordered regions span residues 510–569 (LPHL…DNIN), 609–631 (QSID…VSND), and 647–671 (NKNN…NSGS). Residues 615–626 (GGSGGGSGGGNG) show a composition bias toward gly residues. The stretch at 690–729 (CIKKYNSLKDSYLELKQKYQEEREKRLELEKELERYRLSS) forms a coiled coil. Residues 748-786 (NINSNNSTTTTTTTTTTTTTPIPLSTSNNNNNNNNNSTL) are disordered. Residues 812-840 (YEKRVKWKENTEKEANQQLEVIKSKIDLF) are a coiled coil. Disordered stretches follow at residues 861 to 881 (SENI…QNPQ), 905 to 927 (LTPR…PIPL), 963 to 991 (TPQK…SKST), 1006 to 1096 (SGHF…RLGK), and 1143 to 1194 (NGAN…SERI). Low complexity predominate over residues 870–881 (QQQQQQQQQNPQ). Residues 905-915 (LTPRKSRENSV) are compositionally biased toward basic and acidic residues. Composition is skewed to low complexity over residues 971–981 (PQQQQQQQPPQ), 1012–1030 (SSSN…FSNN), 1043–1079 (QHQQ…LQTQ), and 1143–1153 (NGANNLGGLVL). Residues 1151-1228 (LVLTSDKEKE…KKHKKIKGLF (78 aa)) are a coiled coil. The span at 1155-1194 (SDKEKEKLEKEREKSERIEREKQEKEREKLEKEREKSERI) shows a compositional bias: basic and acidic residues. The region spanning 1233–1411 (SNKESLPFRR…TFIEDFHYIF (179 aa)) is the Rho-GAP domain. Positions 1425–1482 (DDDYDSSSFGSNNTPSSHSPHSSSPTLNPAVTTTTTTTTTTNTTTTTNTTTTPTSATI) are disordered. The segment covering 1430–1476 (SSSFGSNNTPSSHSPHSSSPTLNPAVTTTTTTTTTTNTTTTTNTTTT) has biased composition (low complexity).

The protein localises to the cytoplasm. Rho GTPase-activating protein involved in the signal transduction pathway. This Dictyostelium discoideum (Social amoeba) protein is Rho GTPase-activating protein gacHH (gacHH).